The primary structure comprises 67 residues: Large ribosomal subunit protein bL35 (67 aa).

Belongs to the bacterial ribosomal protein bL35 family.

This is Large ribosomal subunit protein bL35 from Acidiphilium cryptum (strain JF-5).